The chain runs to 1441 residues: Remodeling and spacing factor 1 (1441 aa).

A DDT domain is found at 17–84; it reads PGSCPNFAVV…MRKIGKSVTA (68 aa). Glycyl lysine isopeptide (Lys-Gly) (interchain with G-Cter in SUMO2) cross-links involve residues lysine 136 and lysine 215. A compositionally biased stretch (polar residues) spans 215–227; that stretch reads KNSSQQDNSSRES. A disordered region spans residues 215-283; sequence KNSSQQDNSS…TTVKKEKEDE (69 aa). Serine 227 is modified (phosphoserine). Composition is skewed to basic and acidic residues over residues 234–257 and 274–283; these read ETKK…KSEE and TTVKKEKEDE. Glycyl lysine isopeptide (Lys-Gly) (interchain with G-Cter in SUMO2) cross-links involve residues lysine 236, lysine 243, lysine 248, lysine 252, and lysine 254. A Glycyl lysine isopeptide (Lys-Gly) (interchain with G-Cter in SUMO1); alternate cross-link involves residue lysine 277. Residue lysine 277 forms a Glycyl lysine isopeptide (Lys-Gly) (interchain with G-Cter in SUMO2); alternate linkage. Glycyl lysine isopeptide (Lys-Gly) (interchain with G-Cter in SUMO2) cross-links involve residues lysine 284, lysine 288, lysine 294, lysine 305, lysine 306, lysine 309, lysine 323, lysine 327, lysine 337, lysine 342, lysine 358, lysine 373, lysine 381, and lysine 390. Over residues 330–340 the composition is skewed to basic and acidic residues; sequence RADPKDTKSSM. The interval 330-385 is disordered; the sequence is RADPKDTKSSMEKPVAQEPERIEFGGNIKSSHEITEKSTEETEKLKNDQQAKIPLK. Residues 359 to 378 are compositionally biased toward basic and acidic residues; the sequence is SSHEITEKSTEETEKLKNDQ. Residues serine 392 and serine 397 each carry the phosphoserine modification. Glycyl lysine isopeptide (Lys-Gly) (interchain with G-Cter in SUMO2) cross-links involve residues lysine 400, lysine 405, lysine 415, and lysine 419. The residue at position 429 (serine 429) is a Phosphoserine. Residue lysine 439 forms a Glycyl lysine isopeptide (Lys-Gly) (interchain with G-Cter in SUMO2) linkage. Lysine 456 is covalently cross-linked (Glycyl lysine isopeptide (Lys-Gly) (interchain with G-Cter in SUMO1); alternate). Lysine 456 is covalently cross-linked (Glycyl lysine isopeptide (Lys-Gly) (interchain with G-Cter in SUMO2); alternate). Glycyl lysine isopeptide (Lys-Gly) (interchain with G-Cter in SUMO2) cross-links involve residues lysine 463 and lysine 468. Over residues 467–480 the composition is skewed to basic and acidic residues; the sequence is TKEESYSPSKDRNI. Residues 467–634 form a disordered region; the sequence is TKEESYSPSK…AAETSPPSNI (168 aa). Serine 473 bears the Phosphoserine mark. Residues 482-498 are compositionally biased toward polar residues; the sequence is TEGNGTESLNSVITSMK. Lysine 498 participates in a covalent cross-link: Glycyl lysine isopeptide (Lys-Gly) (interchain with G-Cter in SUMO2). The span at 500-514 shows a compositional bias: basic and acidic residues; it reads GELEKETAPLRKDAD. The residue at position 524 (serine 524) is a Phosphoserine. Polar residues predominate over residues 552-562; the sequence is SKTALSSTESC. A Glycyl lysine isopeptide (Lys-Gly) (interchain with G-Cter in SUMO2) cross-link involves residue lysine 565. The span at 565-601 shows a compositional bias: basic and acidic residues; it reads KGEEKSPKTKKDKRPPILECLEKLEKSKKTFLDKDAQ. 2 positions are modified to phosphoserine: serine 570 and serine 604. Positions 609–621 are enriched in basic and acidic residues; it reads EVPKSTLESEKPG. Serine 622 bears the Phosphoserine mark. Position 628 is a phosphothreonine (threonine 628). Phosphoserine is present on serine 629. Glycyl lysine isopeptide (Lys-Gly) (interchain with G-Cter in SUMO2) cross-links involve residues lysine 662, lysine 663, lysine 670, lysine 677, lysine 698, and lysine 709. The interval 675 to 887 is disordered; it reads FTKVEMDNLD…EEKESEEAIL (213 aa). At serine 748 the chain carries Phosphoserine. 3 stretches are compositionally biased toward basic and acidic residues: residues 753 to 770, 789 to 802, and 816 to 831; these read LEPE…EKTN, AEIR…KRGE, and KTDK…KDTN. Glycyl lysine isopeptide (Lys-Gly) (interchain with G-Cter in SUMO2) cross-links involve residues lysine 758, lysine 768, lysine 795, and lysine 799. A compositionally biased stretch (low complexity) spans 864–873; that stretch reads GSGSEKSSAA. Residues 874–887 show a composition bias toward acidic residues; that stretch reads SEEEEEKESEEAIL. Serine 882 is subject to Phosphoserine. The PHD-type zinc finger occupies 891-941; that stretch reads DEPCKKCGLPNHPELILLCDSCDSGYHTACLRPPLMIIPDGEWFCPPCQHK. A coiled-coil region spans residues 942 to 1012; that stretch reads LLCEKLEEQL…SKANLLERRS (71 aa). The segment at 983 to 1007 is disordered; that stretch reads PPQEPDFSEDQEEKKKDSKKSKANL. Lysine 1039 participates in a covalent cross-link: Glycyl lysine isopeptide (Lys-Gly) (interchain with G-Cter in SUMO2). Lysine 1050 is subject to N6-acetyllysine. A disordered region spans residues 1063–1428; that stretch reads ISTILDEERK…EEEEDELLRV (366 aa). Composition is skewed to acidic residues over residues 1094–1107 and 1120–1141; these read LDSD…ESED and VVSD…DSDT. Residues serine 1096, serine 1098, and serine 1105 each carry the phosphoserine modification. Basic residues predominate over residues 1146-1169; sequence RRLRRHPSRPMRQSRRLRRKTPKK. The segment covering 1189 to 1199 has biased composition (acidic residues); sequence SDFSDDFSDDF. The span at 1203-1212 shows a compositional bias: basic residues; sequence RRRRSRRNQK. Serine 1221, serine 1223, and serine 1226 each carry phosphoserine. The segment covering 1229-1244 has biased composition (basic residues); the sequence is SLRRGKEIRRVHKRRL. Phosphoserine occurs at positions 1258 and 1277. Threonine 1278 bears the Phosphothreonine mark. Residues 1280-1292 are compositionally biased toward acidic residues; it reads EYSEADEEEEEEE. Threonine 1305 carries the post-translational modification Phosphothreonine. Phosphoserine occurs at positions 1325 and 1336. Basic and acidic residues predominate over residues 1335–1344; the sequence is ESTKKPYRIE. Lysine 1339 carries the post-translational modification N6-acetyllysine. A phosphoserine mark is found at serine 1345, serine 1359, and serine 1375. The span at 1394-1408 shows a compositional bias: polar residues; it reads PKDNSTASASLASNG.

In terms of assembly, component of the RSF-1 ISWI chromatin-remodeling complex at least composed of SMARCA1 and RSF1. Within the RSF-1 ISWI chromatin-remodeling complex interacts with SMARCA1. Component of the RSF-5 ISWI chromatin-remodeling complex (also called the RSF complex) at least composed of SMARCA5/SNF2H and RSF1. Within the RSF-5 ISWI chromatin-remodeling complex interacts with SMARCA5/SNF2H; the interaction is direct. Identified in a centromere complex containing histones H2A, H2B and H4, and at least CENPA, CENPB, CENPC, CENPT, CENPN, HJURP, SUPT16H, SSRP1 and RSF1. Also binds the HBV pX/HBx protein, which is required to activate transcription of the viral genome. Phosphorylated. As to expression, ubiquitously expressed. Highly expressed in the heart, skeletal muscle, kidney and placenta. Expressed at low levels in the brain and colon.

Its subcellular location is the nucleus. Its function is as follows. Regulatory subunit of the ATP-dependent RSF-1 and RSF-5 ISWI chromatin-remodeling complexes, which form ordered nucleosome arrays on chromatin and facilitate access to DNA during DNA-templated processes such as DNA replication, transcription, and repair. Binds to core histones together with SMARCA5, and is required for the assembly of regular nucleosome arrays by the RSF-5 ISWI chromatin-remodeling complex. Directly stimulates the ATPase activity of SMARCA1 and SMARCA5 in the RSF-1 and RSF-5 ISWI chromatin-remodeling complexes, respectively. The RSF-1 ISWI chromatin remodeling complex has a lower ATP hydrolysis rate than the RSF-5 ISWI chromatin-remodeling complex. The complexes do not have the ability to slide mononucleosomes to the center of a DNA template. Facilitates transcription of hepatitis B virus (HBV) genes by the pX transcription activator. In case of infection by HBV, together with pX, it represses TNF-alpha induced NF-kappa-B transcription activation. Represses transcription when artificially recruited to chromatin by fusion to a heterogeneous DNA binding domain. This chain is Remodeling and spacing factor 1 (RSF1), found in Homo sapiens (Human).